The following is a 306-amino-acid chain: Dirigent protein 24 (306 aa).

The first 21 residues, 1–21 (MAKALSLTIFLFLLIASNVQS), serve as a signal peptide directing secretion. The tract at residues 36-61 (PQVPEEEDDSPQAVTTTPTPIPLPGP) is disordered.

Belongs to the plant dirigent protein family. Homodimer.

It localises to the secreted. It is found in the extracellular space. The protein localises to the apoplast. Dirigent proteins impart stereoselectivity on the phenoxy radical-coupling reaction, yielding optically active lignans from two molecules of coniferyl alcohol in the biosynthesis of lignans, flavonolignans, and alkaloids and thus plays a central role in plant secondary metabolism. The polypeptide is Dirigent protein 24 (DIR24) (Arabidopsis thaliana (Mouse-ear cress)).